The sequence spans 930 residues: Dual serine/threonine and tyrosine protein kinase (930 aa).

Residues 1–14 (MEGDGVPWGSEPVS) are compositionally biased toward low complexity. The interval 1–22 (MEGDGVPWGSEPVSGPGPGGGG) is disordered. Coiled-coil stretches lie at residues 190–216 (EEDLEVQENNEDAAHVLAELEVTMHHA) and 396–432 (RKKENELYESLMNIANRKQEEMKDMIVETLNTMKEEL). The region spanning 653-907 (PKLGQELGRG…PLLGIVQPML (255 aa)) is the Protein kinase domain. ATP-binding positions include 659-667 (LGRGQYGVV) and lysine 682. The Proton acceptor role is filled by aspartate 778.

This sequence belongs to the protein kinase superfamily. Ser/Thr protein kinase family.

It localises to the cytoplasm. The protein localises to the cell membrane. Its subcellular location is the apical cell membrane. The protein resides in the basolateral cell membrane. It is found in the cell junction. The enzyme catalyses L-seryl-[protein] + ATP = O-phospho-L-seryl-[protein] + ADP + H(+). It catalyses the reaction L-threonyl-[protein] + ATP = O-phospho-L-threonyl-[protein] + ADP + H(+). The catalysed reaction is L-tyrosyl-[protein] + ATP = O-phospho-L-tyrosyl-[protein] + ADP + H(+). In terms of biological role, acts as a positive regulator of ERK phosphorylation downstream of fibroblast growth factor-receptor activation. Involved in the regulation of both caspase-dependent apoptosis and caspase-independent cell death. In the skin, it plays a predominant role in suppressing caspase-dependent apoptosis in response to UV stress in a range of dermal cell types. This Pan troglodytes (Chimpanzee) protein is Dual serine/threonine and tyrosine protein kinase (DSTYK).